The primary structure comprises 367 residues: DNA-directed RNA polymerase II subunit GRINL1A (367 aa).

The stretch at 15 to 40 forms a coiled coil; it reads DLERRSLAELREMLKRQERLLRNEKF. The interval 29 to 68 is important for transcription repressor activity; sequence KRQERLLRNEKFICKLPDKGKKIFDSFAKLKAAIAECEEV. Polar residues-rich tracts occupy residues 117-131, 176-185, and 205-225; these read SVDNIKSSQTSQNQG, RVSSQAEDTS, and GEQQSENASTKNLTGLSSGTQ. 3 disordered regions span residues 117-185, 203-225, and 254-281; these read SVDN…EDTS, DQGEQQSENASTKNLTGLSSGTQ, and PFRQNDSSSHCQKSRSPISSEERRRRDK. The tract at residues 226–297 is interaction with Pol II; it reads KKPHYMEVLE…TAARLLPLHH (72 aa). Phosphoserine is present on Ser269. The segment at 298–313 is important for transcription repressor activity; sequence MPTQLLSIEESLALQK. Residues 300–329 are a coiled coil; sequence TQLLSIEESLALQKQRKQKYEEMQAKLAAQ. Residues 314-339 are interaction with Pol II; the sequence is QRKQKYEEMQAKLAAQKLAERLNIKM. A disordered region spans residues 335–367; the sequence is LNIKMRSYNPEGESSGRYREVRDEDDDWSSDEF. Residues 357 to 367 are compositionally biased toward acidic residues; that stretch reads DEDDDWSSDEF.

It belongs to the GRINL1 family. Component of the Pol II(G) complex, which contains the RNA polymerase II (Pol II) core complex subunits and POLR2M isoform 1. Pol II(G) appears to be an abundant form of Pol II. In terms of processing, dephosphorylated at Ser-269 by the PNUTS-PP1 complex, promoting RNA polymerase II transcription pause-release.

It is found in the nucleus. Appears to be a stable component of the Pol II(G) complex form of RNA polymerase II (Pol II). Pol II synthesizes mRNA precursors and many functional non-coding RNAs and is the central component of the basal RNA polymerase II transcription machinery. May play a role in the Mediator complex-dependent regulation of transcription activation. Acts as a negative regulator of transcriptional activation; this repression is relieved by the Mediator complex, which restores Pol II(G) activator-dependent transcription to a level equivalent to that of Pol II. The polypeptide is DNA-directed RNA polymerase II subunit GRINL1A (POLR2M) (Pongo abelii (Sumatran orangutan)).